The primary structure comprises 67 residues: Small integral membrane protein 20 (67 aa).

Over 1 to 6 (MSRNLR) the chain is Mitochondrial matrix. A helical transmembrane segment spans residues 7–27 (TALIFGGFISLIGAAFYPIYF). Over 28–67 (RPLMRLEEYKKEQAINRAGIVQEDVQPPGLKVWSDPFGRK) the chain is Mitochondrial intermembrane. F64 is modified (phenylalanine amide).

As to quaternary structure, component of the MITRAC (mitochondrial translation regulation assembly intermediate of cytochrome c oxidase complex) complex, the core components of this complex being COA3/MITRAC12 and COX14. Interacts with COA3/MITRAC12 and COX4I1. Directly interacts with newly synthesized MT-CO1/COX1. As to expression, expressed in the ovary, specifically in granulosa cells of follicles that have passed the primary stage and in oocytes (at protein level).

Its subcellular location is the mitochondrion inner membrane. It is found in the secreted. In terms of biological role, component of the MITRAC (mitochondrial translation regulation assembly intermediate of cytochrome c oxidase complex) complex, that regulates cytochrome c oxidase assembly. Promotes the progression of complex assembly after the association of MT-CO1/COX1 with COX4I1 and COX6C. Chaperone-like assembly factor required to stabilize newly synthesized MT-CO1/COX1 and to prevent its premature turnover. Functionally, peptide involved in a broad spectrum of regulatory functions. Is a ligand for GPR173. As part of the reproductive cycle, it regulates gonadotropin-releasing hormone (GnRH) signaling in the hypothalamus and pituitary gland which augments the release of luteinizing hormone. Plays a protective role in memory retention through activation of GNRHR. Regulates the secretion of AVP by hypothalamic neurons. Plays a role in the transduction of the itch sensation. Induces anxiolytic effects, reducing behavior associated with anxiety. Regulates food intake as well as satiation and satiety. In the ovary, it regulates follicular growth by stimulating granulosa cell proliferation by increasing the expression of GPR173, CREB1, CYP19A1, KITLG, FSHR, and LHCGR. It also increases the production of estradiol (E2). In the heart, it regulates contractility and relaxation. It also plays a cardioprotective role during ischemia, where it activates the SAFE and RISK pathways. Stimulates the proliferation and differentiation of preadipocytes. In pancreatic islet cells, it induces proliferation of islet cells as well as the production of INS. This chain is Small integral membrane protein 20 (SMIM20), found in Homo sapiens (Human).